Here is a 443-residue protein sequence, read N- to C-terminus: ATP-dependent protease ATPase subunit HslU (443 aa).

Residues Ile18, 60–65 (GVGKTE), Asp256, Glu321, and Arg393 contribute to the ATP site.

The protein belongs to the ClpX chaperone family. HslU subfamily. A double ring-shaped homohexamer of HslV is capped on each side by a ring-shaped HslU homohexamer. The assembly of the HslU/HslV complex is dependent on binding of ATP.

The protein localises to the cytoplasm. In terms of biological role, ATPase subunit of a proteasome-like degradation complex; this subunit has chaperone activity. The binding of ATP and its subsequent hydrolysis by HslU are essential for unfolding of protein substrates subsequently hydrolyzed by HslV. HslU recognizes the N-terminal part of its protein substrates and unfolds these before they are guided to HslV for hydrolysis. This Pectobacterium carotovorum subsp. carotovorum (strain PC1) protein is ATP-dependent protease ATPase subunit HslU.